The sequence spans 169 residues: Putative phosphoesterase BLi01284/BL02661 (169 aa).

The active-site Proton donor is the His34. 2 consecutive short sequence motifs (HXTX) follow at residues 34–37 and 115–118; these read HLTL and HVTV. The active-site Proton acceptor is His115.

It belongs to the 2H phosphoesterase superfamily. YjcG family.

In Bacillus licheniformis (strain ATCC 14580 / DSM 13 / JCM 2505 / CCUG 7422 / NBRC 12200 / NCIMB 9375 / NCTC 10341 / NRRL NRS-1264 / Gibson 46), this protein is Putative phosphoesterase BLi01284/BL02661.